The following is a 325-amino-acid chain: Ribose-phosphate pyrophosphokinase 2 (325 aa).

Residue Arg96 to Asp101 coordinates ATP. Mg(2+) is bound by residues Asp135, His137, Asp146, and Asp150. His137 contacts ATP. A binding of phosphoribosylpyrophosphate region spans residues Lys219–Gly234.

This sequence belongs to the ribose-phosphate pyrophosphokinase family. As to quaternary structure, homodimer. The active form is probably a hexamer composed of 3 homodimers. The cofactor is Mg(2+).

The enzyme catalyses D-ribose 5-phosphate + ATP = 5-phospho-alpha-D-ribose 1-diphosphate + AMP + H(+). The protein operates within metabolic intermediate biosynthesis; 5-phospho-alpha-D-ribose 1-diphosphate biosynthesis; 5-phospho-alpha-D-ribose 1-diphosphate from D-ribose 5-phosphate (route I): step 1/1. Activated by magnesium and inorganic phosphate. Competitively or non-competitively inhibited by ADP, 2,3-bisphosphoglyceride or GDP. In terms of biological role, catalyzes the synthesis of phosphoribosylpyrophosphate (PRPP) that is essential for nucleotide synthesis. This is Ribose-phosphate pyrophosphokinase 2 (PRPS2) from Gallus gallus (Chicken).